Reading from the N-terminus, the 87-residue chain is U24 protein (87 aa).

Position 6 is a phosphothreonine (threonine 6). Positions proline 8–tyrosine 11 match the PPXY motif motif. The chain crosses the membrane as a helical span at residues phenylalanine 59–valine 79.

As to quaternary structure, interacts with host ITCH; this interaction probably mediates ITCH degradation. Interacts probably with NEDD4.

It localises to the membrane. Down-regulates the TCR/CD3E complex and the transferrin receptor TFRC in host T-cells by blocking them from recycling back to the cell surface. The chain is U24 protein (U24) from Homo sapiens (Human).